Consider the following 140-residue polypeptide: Putative pre-16S rRNA nuclease (140 aa).

It belongs to the YqgF nuclease family.

The protein resides in the cytoplasm. Its function is as follows. Could be a nuclease involved in processing of the 5'-end of pre-16S rRNA. The protein is Putative pre-16S rRNA nuclease of Aeromonas hydrophila.